The chain runs to 745 residues: Photosystem I P700 chlorophyll a apoprotein A2 (745 aa).

8 helical membrane-spanning segments follow: residues 49-72 (LFAT…FHIA), 138-161 (LYAG…LHLQ), 178-202 (LNHH…HVAI), 276-294 (MAHH…GHMY), 338-361 (LHFQ…QHMY), 377-403 (AALY…IFLV), 425-447 (AIIS…LYVH), and 528-546 (FLVH…LILV). Cys-570 and Cys-579 together coordinate [4Fe-4S] cluster. Helical transmembrane passes span 586–607 (AFYL…YWHW) and 654–676 (LAVW…MFLI). Chlorophyll a contacts are provided by His-665, Met-673, and Tyr-681. Residue Trp-682 participates in phylloquinone binding. Residues 718–738 (LVGLAHFTVGYVLTYAAFVIA) traverse the membrane as a helical segment.

It belongs to the PsaA/PsaB family. In terms of assembly, the PsaA/B heterodimer binds the P700 chlorophyll special pair and subsequent electron acceptors. PSI consists of a core antenna complex that captures photons, and an electron transfer chain that converts photonic excitation into a charge separation. The cyanobacterial PSI reaction center is composed of one copy each of PsaA,B,C,D,E,F,I,J,K,L,M and X, and forms trimeric complexes. It depends on PSI electron transfer chain: 5 chlorophyll a, 1 chlorophyll a', 2 phylloquinones and 3 4Fe-4S clusters. PSI core antenna: 90 chlorophyll a, 22 carotenoids, 3 phospholipids and 1 galactolipid. P700 is a chlorophyll a/chlorophyll a' dimer, A0 is one or more chlorophyll a, A1 is one or both phylloquinones and FX is a shared 4Fe-4S iron-sulfur center. as a cofactor.

It is found in the cellular thylakoid membrane. The catalysed reaction is reduced [plastocyanin] + hnu + oxidized [2Fe-2S]-[ferredoxin] = oxidized [plastocyanin] + reduced [2Fe-2S]-[ferredoxin]. PsaA and PsaB bind P700, the primary electron donor of photosystem I (PSI), as well as the electron acceptors A0, A1 and FX. PSI is a plastocyanin/cytochrome c6-ferredoxin oxidoreductase, converting photonic excitation into a charge separation, which transfers an electron from the donor P700 chlorophyll pair to the spectroscopically characterized acceptors A0, A1, FX, FA and FB in turn. Oxidized P700 is reduced on the lumenal side of the thylakoid membrane by plastocyanin or cytochrome c6. The protein is Photosystem I P700 chlorophyll a apoprotein A2 of Synechococcus sp. (strain JA-3-3Ab) (Cyanobacteria bacterium Yellowstone A-Prime).